The primary structure comprises 233 residues: Large ribosomal subunit protein uL1 (233 aa).

This sequence belongs to the universal ribosomal protein uL1 family. As to quaternary structure, part of the 50S ribosomal subunit.

In terms of biological role, binds directly to 23S rRNA. The L1 stalk is quite mobile in the ribosome, and is involved in E site tRNA release. Functionally, protein L1 is also a translational repressor protein, it controls the translation of the L11 operon by binding to its mRNA. This chain is Large ribosomal subunit protein uL1, found in Polynucleobacter necessarius subsp. necessarius (strain STIR1).